Here is a 60-residue protein sequence, read N- to C-terminus: UPF0434 protein Dtpsy_1553 (60 aa).

Belongs to the UPF0434 family.

In Acidovorax ebreus (strain TPSY) (Diaphorobacter sp. (strain TPSY)), this protein is UPF0434 protein Dtpsy_1553.